The chain runs to 782 residues: Chaoptin (782 aa).

LRR repeat units follow at residues 16 to 37 (SLLTLKLTHALSSSVQNFPSDA), 43 to 64 (RLEELDLSNNRLRNVPDNSFHF), 67 to 88 (SLKKVHLQDNTIEMIHRGTFQG), 93 to 114 (DLTEVYFSFNSVRNVQQHTFAD), 117 to 138 (QLEQIHLDDNRIESLERRAFMN), 141 to 162 (SLKRLNLKGNKIATIAYETFQN), 165 to 186 (ELEDLDLAYNSISSLDFNIFDQ), 191 to 212 (GMFHVNMSHNKLINLVVAPSVP), 224 to 245 (NIKVLDLSFNNITSVAKQFFRP), 249 to 270 (SLMQLYLGHNKLLNATKDLFGN), 273 to 294 (HLQVLDLSHNSLYELDFDTFRN), 297 to 318 (KLQWLDTSHNRISEIPNDLFRF), 321 to 342 (NLRIVDFSHNRLRSLPDNLFRE), 344 to 364 (GLERLDVSHNLLGKLPLTSLS), 370 to 391 (TLSELDLSWNSISSLSHGGQLA), 395 to 416 (CLSWLDLSYNRLGQIDAGTFKG), 419 to 442 (RLASLNLGHNSQLTLEINGLSFQG), 446 to 467 (TLLHLNLDNVSLSQVPALSTPN), 468 to 488 (LLSLSLAFNSLPTVALEVAGN), 491 to 512 (SLRYLNLDYNDLSAVPIVTHSL), 514 to 535 (ELRHLSLEGNPITTLSNTSLLG), and 539 to 560 (QLEELNLKNIDLTVLESGAFCK). N-linked (GlcNAc...) asparagine glycans are attached at residues Asn-196, Asn-234, and Asn-262. 2 N-linked (GlcNAc...) asparagine glycosylation sites follow: Asn-454 and Asn-488. Asn-530 carries N-linked (GlcNAc...) asparagine glycosylation. N-linked (GlcNAc...) asparagine glycosylation is found at Asn-618, Asn-648, and Asn-667.

It belongs to the chaoptin family.

It localises to the cell membrane. In terms of biological role, required for photoreceptor cell morphogenesis. Mediates homophilic cellular adhesion. The polypeptide is Chaoptin (CHP) (Tribolium castaneum (Red flour beetle)).